The following is a 510-amino-acid chain: Lysine--tRNA ligase (510 aa).

Residues glutamate 420 and glutamate 427 each contribute to the Mg(2+) site.

This sequence belongs to the class-II aminoacyl-tRNA synthetase family. In terms of assembly, homodimer. It depends on Mg(2+) as a cofactor.

It localises to the cytoplasm. The catalysed reaction is tRNA(Lys) + L-lysine + ATP = L-lysyl-tRNA(Lys) + AMP + diphosphate. The sequence is that of Lysine--tRNA ligase from Clostridium novyi (strain NT).